The primary structure comprises 101 residues: MEPVDPNLEPWNHPGSQPKTACNNCYCKRCSYHCLVCFQTKGLGISYGRKKRRQRRSAPPSSEDHQNPIPKQPLPQTRGDQTGSEESKKKVESKTETDPFD.

The interval M1–N24 is interaction with human CREBBP. The tract at residues M1 to G48 is transactivation. Residues C22, C25, and C27 each contribute to the Zn(2+) site. The cysteine-rich stretch occupies residues C22–C37. An N6-acetyllysine; by host PCAF modification is found at K28. The Zn(2+) site is built by C30, H33, C34, and C37. The segment at F38–G48 is core. The tract at residues Y47 to D101 is disordered. The short motif at R49–S57 is the Nuclear localization signal, RNA-binding (TAR), and protein transduction element. Residues R49–E86 are interaction with the host capping enzyme RNGTT. Residues K50 and K51 each carry the N6-acetyllysine; by host EP300 and GCN5L2 modification. R52 and R53 each carry asymmetric dimethylarginine; by host PRMT6. K71 is covalently cross-linked (Glycyl lysine isopeptide (Lys-Gly) (interchain with G-Cter in ubiquitin)). The short motif at R78 to D80 is the Cell attachment site element. Residues E85–D101 are compositionally biased toward basic and acidic residues.

This sequence belongs to the lentiviruses Tat family. In terms of assembly, interacts with host CCNT1. Associates with the P-TEFb complex composed at least of Tat, P-TEFb (CDK9 and CCNT1), TAR RNA, RNA Pol II. Recruits the HATs CREBBP, TAF1/TFIID, EP300, PCAF and GCN5L2. Interacts with host KAT5/Tip60; this interaction targets the latter to degradation. Interacts with the host deacetylase SIRT1. Interacts with host capping enzyme RNGTT; this interaction stimulates RNGTT. Binds to host KDR, and to the host integrins ITGAV/ITGB3 and ITGA5/ITGB1. Interacts with host KPNB1/importin beta-1 without previous binding to KPNA1/importin alpha-1. Interacts with EIF2AK2. Interacts with host nucleosome assembly protein NAP1L1; this interaction may be required for the transport of Tat within the nucleus, since the two proteins interact at the nuclear rim. Interacts with host C1QBP/SF2P32; this interaction involves lysine-acetylated Tat. Interacts with the host chemokine receptors CCR2, CCR3 and CXCR4. Interacts with host DPP4/CD26; this interaction may trigger an anti-proliferative effect. Interacts with host LDLR. Interacts with the host extracellular matrix metalloproteinase MMP1. Interacts with host PRMT6; this interaction mediates Tat's methylation. Interacts with, and is ubiquitinated by MDM2/Hdm2. Interacts with host PSMC3 and HTATIP2. Interacts with STAB1; this interaction may overcome SATB1-mediated repression of IL2 and IL2RA (interleukin) in T cells by binding to the same domain than HDAC1. Interacts (when acetylated) with human CDK13, thereby increasing HIV-1 mRNA splicing and promoting the production of the doubly spliced HIV-1 protein Nef. Interacts with host TBP; this interaction modulates the activity of transcriptional pre-initiation complex. Interacts with host RELA. Interacts with host PLSCR1; this interaction negatively regulates Tat transactivation activity by altering its subcellular distribution. Post-translationally, asymmetrical arginine methylation by host PRMT6 seems to diminish the transactivation capacity of Tat and affects the interaction with host CCNT1. Acetylation by EP300, CREBBP, GCN5L2/GCN5 and PCAF regulates the transactivation activity of Tat. EP300-mediated acetylation of Lys-50 promotes dissociation of Tat from the TAR RNA through the competitive binding to PCAF's bromodomain. In addition, the non-acetylated Tat's N-terminus can also interact with PCAF. PCAF-mediated acetylation of Lys-28 enhances Tat's binding to CCNT1. Lys-50 is deacetylated by SIRT1. In terms of processing, polyubiquitination by host MDM2 does not target Tat to degradation, but activates its transactivation function and fosters interaction with CCNT1 and TAR RNA. Post-translationally, phosphorylated by EIF2AK2 on serine and threonine residues adjacent to the basic region important for TAR RNA binding and function. Phosphorylation of Tat by EIF2AK2 is dependent on the prior activation of EIF2AK2 by dsRNA.

The protein resides in the host nucleus. It localises to the host nucleolus. Its subcellular location is the host cytoplasm. The protein localises to the secreted. Transcriptional activator that increases RNA Pol II processivity, thereby increasing the level of full-length viral transcripts. Recognizes a hairpin structure at the 5'-LTR of the nascent viral mRNAs referred to as the transactivation responsive RNA element (TAR) and recruits the cyclin T1-CDK9 complex (P-TEFb complex) that will in turn hyperphosphorylate the RNA polymerase II to allow efficient elongation. The CDK9 component of P-TEFb and other Tat-activated kinases hyperphosphorylate the C-terminus of RNA Pol II that becomes stabilized and much more processive. Other factors such as HTATSF1/Tat-SF1, SUPT5H/SPT5, and HTATIP2 are also important for Tat's function. Besides its effect on RNA Pol II processivity, Tat induces chromatin remodeling of proviral genes by recruiting the histone acetyltransferases (HATs) CREBBP, EP300 and PCAF to the chromatin. This also contributes to the increase in proviral transcription rate, especially when the provirus integrates in transcriptionally silent region of the host genome. To ensure maximal activation of the LTR, Tat mediates nuclear translocation of NF-kappa-B by interacting with host RELA. Through its interaction with host TBP, Tat may also modulate transcription initiation. Tat can reactivate a latently infected cell by penetrating in it and transactivating its LTR promoter. In the cytoplasm, Tat is thought to act as a translational activator of HIV-1 mRNAs. In terms of biological role, extracellular circulating Tat can be endocytosed by surrounding uninfected cells via the binding to several surface receptors such as CD26, CXCR4, heparan sulfate proteoglycans (HSPG) or LDLR. Neurons are rarely infected, but they internalize Tat via their LDLR. Through its interaction with nuclear HATs, Tat is potentially able to control the acetylation-dependent cellular gene expression. Modulates the expression of many cellular genes involved in cell survival, proliferation or in coding for cytokines or cytokine receptors. Tat plays a role in T-cell and neurons apoptosis. Tat induced neurotoxicity and apoptosis probably contribute to neuroAIDS. Circulating Tat also acts as a chemokine-like and/or growth factor-like molecule that binds to specific receptors on the surface of the cells, affecting many cellular pathways. In the vascular system, Tat binds to ITGAV/ITGB3 and ITGA5/ITGB1 integrins dimers at the surface of endothelial cells and competes with bFGF for heparin-binding sites, leading to an excess of soluble bFGF. In Human immunodeficiency virus type 1 group M subtype C (isolate 92BR025) (HIV-1), this protein is Protein Tat.